The chain runs to 265 residues: Hydroxyethylthiazole kinase (265 aa).

Residue M50 participates in substrate binding. R125 and T171 together coordinate ATP. A substrate-binding site is contributed by G198.

The protein belongs to the Thz kinase family. Mg(2+) is required as a cofactor.

It catalyses the reaction 5-(2-hydroxyethyl)-4-methylthiazole + ATP = 4-methyl-5-(2-phosphooxyethyl)-thiazole + ADP + H(+). The protein operates within cofactor biosynthesis; thiamine diphosphate biosynthesis; 4-methyl-5-(2-phosphoethyl)-thiazole from 5-(2-hydroxyethyl)-4-methylthiazole: step 1/1. Functionally, catalyzes the phosphorylation of the hydroxyl group of 4-methyl-5-beta-hydroxyethylthiazole (THZ). The polypeptide is Hydroxyethylthiazole kinase (Salmonella paratyphi A (strain ATCC 9150 / SARB42)).